A 784-amino-acid chain; its full sequence is E3 ubiquitin-protein ligase RNF43 (784 aa).

The N-terminal stretch at 1–23 (MSGGHQLQLAVLWPWLLMATLHA) is a signal peptide. Topologically, residues 24–197 (GFGHTGRVLA…LKEPPAGANY (174 aa)) are extracellular. N62 and N92 each carry an N-linked (GlcNAc...) asparagine glycan. C91 and C119 are disulfide-bonded. Residues 198–218 (DVWILLTVVGTVFVIILASVL) traverse the membrane as a helical segment. At 219–784 (RIRCRPHHSR…ELEELCEQAV (566 aa)) the chain is on the cytoplasmic side. Residues 272–313 (CAICLEEFSEGQELRVISCLHEFHRTCVDPWLYQHRTCPLCM) form an RING-type; atypical zinc finger. 3 disordered regions span residues 364–407 (TSVA…HLAV), 459–478 (ADGPASDSSSGPCHGSSSDS), and 516–671 (DLQG…SLPP). Residues 386 to 395 (RHQRLPRTSH) show a composition bias toward basic residues. The segment covering 464 to 478 (SDSSSGPCHGSSSDS) has biased composition (low complexity). A compositionally biased stretch (basic residues) spans 548-568 (IHYHRHRHHHYKRQFQWHGRK). The segment covering 583 to 608 (SHTQLEPSLPDQQLITPNPTASSMLP) has biased composition (polar residues). A compositionally biased stretch (low complexity) spans 618-629 (EPAPGLAEASSP).

This sequence belongs to the ZNRF3 family. Interacts with AKAP8L, NONO and SFPQ. Interacts with FZD5. Identified in a complex composed of RNF43, LGR5 and RSPO1. Interacts with RSPO2. Interacts with LMBR1L. Post-translationally, autoubiquitinated. Expressed in crypt base columnar cells of small intestinal epithelium. Crypt base columnar cells are small cycling cells residing between the terminally differentiated Paneth cells at crypt bottoms. Colocalizes with Lgr5-positive stem cells.

The protein resides in the cell membrane. It localises to the endoplasmic reticulum membrane. It is found in the nucleus envelope. It catalyses the reaction S-ubiquitinyl-[E2 ubiquitin-conjugating enzyme]-L-cysteine + [acceptor protein]-L-lysine = [E2 ubiquitin-conjugating enzyme]-L-cysteine + N(6)-ubiquitinyl-[acceptor protein]-L-lysine.. The protein operates within protein modification; protein ubiquitination. In terms of biological role, E3 ubiquitin-protein ligase that acts as a negative regulator of the Wnt signaling pathway by mediating the ubiquitination, endocytosis and subsequent degradation of Wnt receptor complex components Frizzled. Acts on both canonical and non-canonical Wnt signaling pathway. Along with RSPO2 and ZNRF3, constitutes a master switch that governs limb specification. The sequence is that of E3 ubiquitin-protein ligase RNF43 (Rnf43) from Mus musculus (Mouse).